The primary structure comprises 397 residues: Elongation factor Tu (397 aa).

The 197-residue stretch at 10–206 (KPHVNIGTIG…AIDSYIPTPE (197 aa)) folds into the tr-type G domain. The interval 19-26 (GHVDHGKT) is G1. 19–26 (GHVDHGKT) is a binding site for GTP. Threonine 26 contacts Mg(2+). Positions 60-64 (GITIN) are G2. The interval 81-84 (DCPG) is G3. GTP contacts are provided by residues 81–85 (DCPGH) and 136–139 (NKAD). The tract at residues 136–139 (NKAD) is G4. Positions 174-176 (SAL) are G5.

This sequence belongs to the TRAFAC class translation factor GTPase superfamily. Classic translation factor GTPase family. EF-Tu/EF-1A subfamily. As to quaternary structure, monomer.

The protein resides in the cytoplasm. It carries out the reaction GTP + H2O = GDP + phosphate + H(+). Functionally, GTP hydrolase that promotes the GTP-dependent binding of aminoacyl-tRNA to the A-site of ribosomes during protein biosynthesis. The protein is Elongation factor Tu of Clostridium botulinum (strain Loch Maree / Type A3).